Here is a 126-residue protein sequence, read N- to C-terminus: Fluoride-specific ion channel FluC (126 aa).

The next 4 membrane-spanning stretches (helical) occupy residues 3–23 (LSIL…WFLG), 35–55 (LGTL…VAYF), 68–88 (FIIT…AEVV), and 103–123 (IAIH…TVAV). Glycine 75 and serine 78 together coordinate Na(+).

Belongs to the fluoride channel Fluc/FEX (TC 1.A.43) family.

The protein localises to the cell inner membrane. The enzyme catalyses fluoride(in) = fluoride(out). With respect to regulation, na(+) is not transported, but it plays an essential structural role and its presence is essential for fluoride channel function. Its function is as follows. Fluoride-specific ion channel. Important for reducing fluoride concentration in the cell, thus reducing its toxicity. This Paraburkholderia phymatum (strain DSM 17167 / CIP 108236 / LMG 21445 / STM815) (Burkholderia phymatum) protein is Fluoride-specific ion channel FluC.